A 449-amino-acid polypeptide reads, in one-letter code: MKGLFIRTYGCQMNVYDSERIRDVLRPLGYAPVETPESADLVVVNTCHIREKATEKVYSELGQLKRMKEASGGRMTIAVAGCVAQAEGEELIRRQPAVDLVLGPQAYHKLPEMIARASRAIGDRLETEFDTVEKFDALPKTREADGPAAFVSVQEGCDKFCTFCVVPYTRGAEMSRRVDDIVFETRSLASQGVREITLLGQNVNAFHGPAPVLEGGEDWTLGQLCRHLSKIGGIERIRYTTSHPRDMDDDLIAAHGDTPAMMPFLHLPVQSGSDRILKAMNRGHTADHYRDIITRVRAARPDIAIASDFIVGFPGESDADFEATMQLVRDIGYAIAYSFKYSSRPGTPAAEMHGHLSESVKDARLQALQALLREQQTEFNASQIGKTLPVLVTGKGRNAGQMHGRSPYLQAVHFEGPDDLNGKIVDVKVIGASLNSLTGELVRVAEAAL.

The 118-residue stretch at 2–119 (KGLFIRTYGC…LPEMIARASR (118 aa)) folds into the MTTase N-terminal domain. The [4Fe-4S] cluster site is built by Cys11, Cys47, Cys82, Cys157, Cys161, and Cys164. A Radical SAM core domain is found at 143–378 (EADGPAAFVS…QALLREQQTE (236 aa)). One can recognise a TRAM domain in the interval 381 to 443 (ASQIGKTLPV…LNSLTGELVR (63 aa)).

This sequence belongs to the methylthiotransferase family. MiaB subfamily. Monomer. Requires [4Fe-4S] cluster as cofactor.

It is found in the cytoplasm. The enzyme catalyses N(6)-dimethylallyladenosine(37) in tRNA + (sulfur carrier)-SH + AH2 + 2 S-adenosyl-L-methionine = 2-methylsulfanyl-N(6)-dimethylallyladenosine(37) in tRNA + (sulfur carrier)-H + 5'-deoxyadenosine + L-methionine + A + S-adenosyl-L-homocysteine + 2 H(+). In terms of biological role, catalyzes the methylthiolation of N6-(dimethylallyl)adenosine (i(6)A), leading to the formation of 2-methylthio-N6-(dimethylallyl)adenosine (ms(2)i(6)A) at position 37 in tRNAs that read codons beginning with uridine. In Hyphomonas neptunium (strain ATCC 15444), this protein is tRNA-2-methylthio-N(6)-dimethylallyladenosine synthase.